The chain runs to 356 residues: Peptide chain release factor 1 (356 aa).

Q233 bears the N5-methylglutamine mark.

This sequence belongs to the prokaryotic/mitochondrial release factor family. Post-translationally, methylated by PrmC. Methylation increases the termination efficiency of RF1.

Its subcellular location is the cytoplasm. Peptide chain release factor 1 directs the termination of translation in response to the peptide chain termination codons UAG and UAA. This chain is Peptide chain release factor 1, found in Symbiobacterium thermophilum (strain DSM 24528 / JCM 14929 / IAM 14863 / T).